The chain runs to 512 residues: Flavonoid 3'-monooxygenase (512 aa).

Residues 1–21 (MEILSLILYTVIFSFLLQFIL) traverse the membrane as a helical segment. The Cytoplasmic segment spans residues 22–512 (RSFFRKRYPL…PRLEAQAYIG (491 aa)). Heme is bound at residue C447.

It belongs to the cytochrome P450 family. Requires heme as cofactor. In terms of tissue distribution, high expression in petals and ovaries and to a lower extent in sepals, pedicels, anthers and stems. Not detected in leaves, style or roots.

The protein resides in the endoplasmic reticulum membrane. It catalyses the reaction a 3'-unsubstituted flavone + reduced [NADPH--hemoprotein reductase] + O2 = a 3'-hydroxyflavone + oxidized [NADPH--hemoprotein reductase] + H2O + H(+). Its pathway is secondary metabolite biosynthesis; flavonoid biosynthesis. Functionally, catalyzes the 3'-hydroxylation of the flavonoid B-ring to the 3',4'-hydroxylated state. Convert naringenin to eriodictyol and dihydrokaempferol to dihydroquercetin. The polypeptide is Flavonoid 3'-monooxygenase (CYP75B2) (Petunia hybrida (Petunia)).